The primary structure comprises 375 residues: Elongation factor Tu (375 aa).

Positions 10–205 (KPHINVGAIG…TMDKYFVIPE (196 aa)) constitute a tr-type G domain. Residues 19–26 (GHVDHGKT) form a G1 region. GTP is bound at residue 19–26 (GHVDHGKT). Residue T26 participates in Mg(2+) binding. Residues 60–64 (GITIN) are G2. Positions 81 to 84 (DCPG) are G3. Residues 81 to 85 (DCPGH) and 136 to 139 (NKMD) each bind GTP. The interval 136 to 139 (NKMD) is G4. The interval 173–175 (SAF) is G5.

The protein belongs to the TRAFAC class translation factor GTPase superfamily. Classic translation factor GTPase family. EF-Tu/EF-1A subfamily. As to quaternary structure, monomer.

The protein localises to the cytoplasm. It catalyses the reaction GTP + H2O = GDP + phosphate + H(+). Functionally, GTP hydrolase that promotes the GTP-dependent binding of aminoacyl-tRNA to the A-site of ribosomes during protein biosynthesis. In Spirochaeta aurantia, this protein is Elongation factor Tu (tuf).